The primary structure comprises 130 residues: Large-conductance mechanosensitive channel (130 aa).

A run of 2 helical transmembrane segments spans residues 11 to 31 and 70 to 90; these read FALK…AAFG and GAFI…FIFV.

This sequence belongs to the MscL family. Homopentamer.

The protein localises to the cell membrane. Channel that opens in response to stretch forces in the membrane lipid bilayer. May participate in the regulation of osmotic pressure changes within the cell. This is Large-conductance mechanosensitive channel from Listeria welshimeri serovar 6b (strain ATCC 35897 / DSM 20650 / CCUG 15529 / CIP 8149 / NCTC 11857 / SLCC 5334 / V8).